We begin with the raw amino-acid sequence, 157 residues long: Trafficking protein particle complex subunit 6b (157 aa).

Belongs to the TRAPP small subunits family. BET3 subfamily. As to quaternary structure, homodimer. Part of a TRAPP complex.

It localises to the golgi apparatus. The protein localises to the cis-Golgi network. The protein resides in the endoplasmic reticulum. Functionally, component of a transport protein particle (TRAPP) complex that may function in specific stages of inter-organelle traffic. Specifically involved in the early development of neural circuitry, likely by controlling the frequency and amplitude of intracellular calcium transients implicated in the regulation of neuron differentiation and survival. The protein is Trafficking protein particle complex subunit 6b of Danio rerio (Zebrafish).